A 760-amino-acid polypeptide reads, in one-letter code: Anti-sigma-I factor RsgI6 (760 aa).

The Cytoplasmic portion of the chain corresponds to 1–55; the sequence is MIVGKVLDMDEKTAIIMTDDFAFLNVVRTSEMAVGKKVKVLDSDIIKPKNSLRRY. The RsgI N-terminal anti-sigma domain occupies 2-49; it reads IVGKVLDMDEKTAIIMTDDFAFLNVVRTSEMAVGKKVKVLDSDIIKPK. A helical transmembrane segment spans residues 56 to 76; it reads LPVAAVAACFVIVLSFVLMFI. Residues 77 to 760 lie on the Extracellular side of the membrane; sequence NGNTARKNIY…GTLQTTYRIP (684 aa). A disordered region spans residues 274–352; sequence AINTGPAESA…STPKPVSPVQ (79 aa). Polar residues predominate over residues 291–352; the sequence is LPATSTPGRT…STPKPVSPVQ (62 aa). The GH10 domain maps to 402-701; that stretch reads DSSNKPIENA…NEAGRRFESL (300 aa). The active-site Proton donor is the Glu538. Glu635 serves as the catalytic Nucleophile.

In the C-terminal section; belongs to the glycosyl hydrolase 10 (cellulase F) family. Interacts (via RsgI N-terminal anti-sigma domain) with SigI6.

The protein localises to the cell membrane. The enzyme catalyses Endohydrolysis of (1-&gt;4)-beta-D-xylosidic linkages in xylans.. The protein operates within glycan degradation; xylan degradation. Functionally, anti-sigma factor for SigI6. Negatively regulates SigI6 activity through direct interaction. Binding of the polysaccharide substrate to the extracellular C-terminal sensing domain of RsgI6 may induce a conformational change in its N-terminal cytoplasmic region, leading to the release and activation of SigI6. Binds to and hydrolyzes insoluble and soluble xylan substrates. Has low enzymatic activity. The chain is Anti-sigma-I factor RsgI6 from Acetivibrio thermocellus (strain ATCC 27405 / DSM 1237 / JCM 9322 / NBRC 103400 / NCIMB 10682 / NRRL B-4536 / VPI 7372) (Clostridium thermocellum).